The primary structure comprises 420 residues: MAATDVDIFSNEEKRNLSLGGHVGFDSLPDQLVSKSVTQGFCFNILCVGETGIGKSTLMNTLFNTMFENEEASHYQNGVYLRPRTYDLQESNVHLKLTIVDTVGFGDQINKEESYKPIVDYIDTQFENYLQEELKVKRSLFNYHDTRIHICLYFISPTGHSLKSLDLVTMKKLDSKVNIIPIIAKADTISKSELHKFKIKIMSELVSNGVQIYQFPTDDEAVTEINSSMNAHLPFAVVGSVEEVKVGNKTVRARQYPWGVVQVENESHCDFVKLREMLIRVNMEDLREQTHARHYELYRRCKLEEMGFKDTDPDSQPFSLQETYEAKRKEFLGDLQKKEEEMRQMFVNKVKETEAELKEKERELHEKFEQLKRMHQEEKRKVEEKRRELEEEMNAFNRRKVAAETLSLSQPLKKDKDKKN.

The Septin-type G domain maps to Gln-39–Glu-305. Residues Gly-49 to Ser-56 are G1 motif. GTP contacts are provided by residues Gly-49–Ser-56, Gly-104, Lys-185–Glu-193, Gly-239, and Arg-254. The segment at Asp-101–Gly-104 is G3 motif. The interval Ala-184 to Asp-187 is G4 motif. Residues Gln-321–Ser-407 are a coiled coil. Positions Met-393–Asn-420 are disordered.

The protein belongs to the TRAFAC class TrmE-Era-EngA-EngB-Septin-like GTPase superfamily. Septin GTPase family.

The protein is Septin-8-A (sept8a) of Danio rerio (Zebrafish).